The following is a 299-amino-acid chain: Probable lipid kinase YegS (299 aa).

Residues 2–133 form the DAGKc domain; it reads ANFPASLLIL…IDMARVNDKT (132 aa). ATP-binding positions include Thr40, 66-72, and Thr95; that span reads GDGTINE. Mg(2+) is bound by residues Leu215, Asp218, and Leu220. Glu271 (proton acceptor) is an active-site residue.

The protein belongs to the diacylglycerol/lipid kinase family. YegS lipid kinase subfamily. Mg(2+) serves as cofactor. It depends on Ca(2+) as a cofactor.

The protein resides in the cytoplasm. In terms of biological role, probably phosphorylates lipids; the in vivo substrate is unknown. The sequence is that of Probable lipid kinase YegS from Salmonella agona (strain SL483).